The chain runs to 389 residues: Alanine racemase (389 aa).

K46 (proton acceptor; specific for D-alanine) is an active-site residue. K46 carries the N6-(pyridoxal phosphate)lysine modification. R144 provides a ligand contact to substrate. Residue Y275 is the Proton acceptor; specific for L-alanine of the active site. M323 is a binding site for substrate.

It belongs to the alanine racemase family. Pyridoxal 5'-phosphate serves as cofactor.

The catalysed reaction is L-alanine = D-alanine. It functions in the pathway amino-acid biosynthesis; D-alanine biosynthesis; D-alanine from L-alanine: step 1/1. Catalyzes the interconversion of L-alanine and D-alanine. May also act on other amino acids. This Mycolicibacterium smegmatis (strain ATCC 700084 / mc(2)155) (Mycobacterium smegmatis) protein is Alanine racemase (alr).